The chain runs to 1183 residues: Phospholipid-transporting ATPase FetA (1183 aa).

The next 3 membrane-spanning stretches (helical) occupy residues 96–116 (ISSL…SITG), 299–319 (VLVV…SIGH), and 348–368 (ALIF…SLYV). D416 functions as the 4-aspartylphosphate intermediate in the catalytic mechanism. ATP contacts are provided by D416, K417, T418, E519, F560, K583, R617, T697, G698, D699, R812, and K818. Residue D416 coordinates Mg(2+). T418 provides a ligand contact to Mg(2+). D838 is a Mg(2+) binding site. The ATP site is built by N841 and D842. Residue D842 participates in Mg(2+) binding. 6 helical membrane passes run 904–924 (FAFT…AQTV), 927–947 (IWFI…GLSL), 981–1001 (CLLH…GTVF), 1014–1034 (FQSF…MQIA), 1049–1069 (WGSL…GLCL), and 1090–1110 (IWLC…GYNF).

It belongs to the cation transport ATPase (P-type) (TC 3.A.3) family. Type IV subfamily. Mg(2+) is required as a cofactor. In terms of tissue distribution, highly expressed in testis.

It is found in the cytoplasmic vesicle. The protein localises to the secretory vesicle. The protein resides in the acrosome membrane. The enzyme catalyses ATP + H2O + phospholipidSide 1 = ADP + phosphate + phospholipidSide 2.. Its function is as follows. P4-ATPase flippase which catalyzes the hydrolysis of ATP coupled to the transport of aminophospholipids from the outer to the inner leaflet of various membranes and ensures the maintenance of asymmetric distribution of phospholipids. Phospholipid translocation also seems to be implicated in vesicle formation and in uptake of lipid signaling molecules. May play a role in phospholid transport across membranes and in acrosome formation. This Mus musculus (Mouse) protein is Phospholipid-transporting ATPase FetA (Atp8b5).